The following is a 415-amino-acid chain: Gamma-glutamyl phosphate reductase (415 aa).

Belongs to the gamma-glutamyl phosphate reductase family.

It is found in the cytoplasm. It catalyses the reaction L-glutamate 5-semialdehyde + phosphate + NADP(+) = L-glutamyl 5-phosphate + NADPH + H(+). It participates in amino-acid biosynthesis; L-proline biosynthesis; L-glutamate 5-semialdehyde from L-glutamate: step 2/2. Functionally, catalyzes the NADPH-dependent reduction of L-glutamate 5-phosphate into L-glutamate 5-semialdehyde and phosphate. The product spontaneously undergoes cyclization to form 1-pyrroline-5-carboxylate. The chain is Gamma-glutamyl phosphate reductase from Ligilactobacillus salivarius (strain UCC118) (Lactobacillus salivarius).